A 450-amino-acid polypeptide reads, in one-letter code: tRNA modification GTPase MnmE (450 aa).

(6S)-5-formyl-5,6,7,8-tetrahydrofolate-binding residues include Arg23, Glu80, and Arg123. The TrmE-type G domain maps to 219–372 (GLHVVLAGQP…LRARLLQMAG (154 aa)). Asn229 is a binding site for K(+). GTP is bound by residues 229-234 (NVGKSS), 248-254 (TPIAGTT), and 273-276 (DTAG). Ser233 is a Mg(2+) binding site. Residues Thr248, Ile250, and Thr253 each contribute to the K(+) site. Thr254 serves as a coordination point for Mg(2+). Lys450 is a (6S)-5-formyl-5,6,7,8-tetrahydrofolate binding site.

The protein belongs to the TRAFAC class TrmE-Era-EngA-EngB-Septin-like GTPase superfamily. TrmE GTPase family. In terms of assembly, homodimer. Heterotetramer of two MnmE and two MnmG subunits. K(+) serves as cofactor.

The protein resides in the cytoplasm. Functionally, exhibits a very high intrinsic GTPase hydrolysis rate. Involved in the addition of a carboxymethylaminomethyl (cmnm) group at the wobble position (U34) of certain tRNAs, forming tRNA-cmnm(5)s(2)U34. This is tRNA modification GTPase MnmE from Bordetella avium (strain 197N).